Consider the following 617-residue polypeptide: Vacuolar protein sorting-associated protein 33B (617 aa).

At A2 the chain carries N-acetylalanine.

Belongs to the STXBP/unc-18/SEC1 family. Interacts with RAB11A and VIPAS39. Interacts with RAB25. Associates with adapter protein complex 3 (AP-3), clathrin:AP-3 and clathrin:HGS complexes. As to quaternary structure, (Microbial infection) Interacts with M.tuberculosis PtpA. Phosphorylated on tyrosine residues. Post-translationally, (Microbial infection) Dephosphorylated by M.tuberculosis PtpA, which induces the reduction of host phagolysosome fusion in M.tuberculosis-infected macrophages. As to expression, ubiquitous; highly expressed in testis and low expression in the lung.

Its subcellular location is the late endosome membrane. The protein localises to the lysosome membrane. It is found in the early endosome. The protein resides in the cytoplasmic vesicle. It localises to the clathrin-coated vesicle. Its subcellular location is the recycling endosome. Functionally, may play a role in vesicle-mediated protein trafficking to lysosomal compartments and in membrane docking/fusion reactions of late endosomes/lysosomes. Required for proper trafficking and targeting of the collagen-modifying enzyme lysyl hydroxylase 3 (LH3) to intracellular collagen. Mediates phagolysosomal fusion in macrophages. Proposed to be involved in endosomal maturation implicating VIPAS39. In epithelial cells, the VPS33B:VIPAS39 complex may play a role in the apical recycling pathway and in the maintenance of the apical-basolateral polarity. Seems to be involved in the sorting of specific cargos from the trans-Golgi network to alpha-granule-destined multivesicular bodies (MVBs) promoting MVBs maturation in megakaryocytes. The protein is Vacuolar protein sorting-associated protein 33B (VPS33B) of Homo sapiens (Human).